A 216-amino-acid polypeptide reads, in one-letter code: Histidine biosynthesis bifunctional protein HisIE (216 aa).

Residues 1–132 (MENILKELKF…KVYEAENAKI (132 aa)) are phosphoribosyl-AMP cyclohydrolase. The tract at residues 133 to 216 (LQEIYDVIVD…IKLEDIYEEA (84 aa)) is phosphoribosyl-ATP pyrophosphohydrolase.

This sequence in the N-terminal section; belongs to the PRA-CH family. It in the C-terminal section; belongs to the PRA-PH family.

It localises to the cytoplasm. It catalyses the reaction 1-(5-phospho-beta-D-ribosyl)-ATP + H2O = 1-(5-phospho-beta-D-ribosyl)-5'-AMP + diphosphate + H(+). The catalysed reaction is 1-(5-phospho-beta-D-ribosyl)-5'-AMP + H2O = 1-(5-phospho-beta-D-ribosyl)-5-[(5-phospho-beta-D-ribosylamino)methylideneamino]imidazole-4-carboxamide. Its pathway is amino-acid biosynthesis; L-histidine biosynthesis; L-histidine from 5-phospho-alpha-D-ribose 1-diphosphate: step 2/9. It participates in amino-acid biosynthesis; L-histidine biosynthesis; L-histidine from 5-phospho-alpha-D-ribose 1-diphosphate: step 3/9. This is Histidine biosynthesis bifunctional protein HisIE (hisI) from Thermoanaerobacter pseudethanolicus (strain ATCC 33223 / 39E) (Clostridium thermohydrosulfuricum).